The primary structure comprises 347 residues: GMP reductase (347 aa).

108 to 131 (ADFEKTKQILDLNPALNFVCIDVA) provides a ligand contact to NADP(+). K(+) contacts are provided by glycine 181 and glycine 183. Cysteine 186 serves as the catalytic Thioimidate intermediate. NADP(+) is bound at residue 216–239 (IVSDGGCTTPGDVAKAFGGGADFV).

Belongs to the IMPDH/GMPR family. GuaC type 1 subfamily. Homotetramer.

The catalysed reaction is IMP + NH4(+) + NADP(+) = GMP + NADPH + 2 H(+). Catalyzes the irreversible NADPH-dependent deamination of GMP to IMP. It functions in the conversion of nucleobase, nucleoside and nucleotide derivatives of G to A nucleotides, and in maintaining the intracellular balance of A and G nucleotides. The sequence is that of GMP reductase from Shigella boydii serotype 4 (strain Sb227).